The chain runs to 240 residues: 1-(5-phosphoribosyl)-5-[(5-phosphoribosylamino)methylideneamino] imidazole-4-carboxamide isomerase (240 aa).

Aspartate 8 acts as the Proton acceptor in catalysis. Residue aspartate 129 is the Proton donor of the active site.

The protein belongs to the HisA/HisF family.

The protein localises to the cytoplasm. It catalyses the reaction 1-(5-phospho-beta-D-ribosyl)-5-[(5-phospho-beta-D-ribosylamino)methylideneamino]imidazole-4-carboxamide = 5-[(5-phospho-1-deoxy-D-ribulos-1-ylimino)methylamino]-1-(5-phospho-beta-D-ribosyl)imidazole-4-carboxamide. It functions in the pathway amino-acid biosynthesis; L-histidine biosynthesis; L-histidine from 5-phospho-alpha-D-ribose 1-diphosphate: step 4/9. The chain is 1-(5-phosphoribosyl)-5-[(5-phosphoribosylamino)methylideneamino] imidazole-4-carboxamide isomerase from Dinoroseobacter shibae (strain DSM 16493 / NCIMB 14021 / DFL 12).